The primary structure comprises 501 residues: ATP synthase subunit alpha (501 aa).

169-176 (GDRQTGKT) is an ATP binding site.

The protein belongs to the ATPase alpha/beta chains family. As to quaternary structure, F-type ATPases have 2 components, CF(1) - the catalytic core - and CF(0) - the membrane proton channel. CF(1) has five subunits: alpha(3), beta(3), gamma(1), delta(1), epsilon(1). CF(0) has three main subunits: a(1), b(2) and c(9-12). The alpha and beta chains form an alternating ring which encloses part of the gamma chain. CF(1) is attached to CF(0) by a central stalk formed by the gamma and epsilon chains, while a peripheral stalk is formed by the delta and b chains.

Its subcellular location is the cell membrane. The enzyme catalyses ATP + H2O + 4 H(+)(in) = ADP + phosphate + 5 H(+)(out). Functionally, produces ATP from ADP in the presence of a proton gradient across the membrane. The alpha chain is a regulatory subunit. The polypeptide is ATP synthase subunit alpha (Streptococcus mutans serotype c (strain ATCC 700610 / UA159)).